The primary structure comprises 202 residues: Histone H1 (202 aa).

Disordered regions lie at residues 1–50 (MTAI…VTHP) and 114–202 (YKLS…KIAV). Residues 18–38 (EASKVKEQAPATDKKPRAPKE) show a composition bias toward basic and acidic residues. The 71-residue stretch at 48-118 (THPPYFQMIK…KIKASYKLSE (71 aa)) folds into the H15 domain. Basic residues predominate over residues 160–202 (KAKATPKPKKVGAKRTRKSTPAKAKQPKSIKSPAAKRAKKIAV).

The protein belongs to the histone H1/H5 family.

The protein resides in the nucleus. It localises to the chromosome. In terms of biological role, histones H1 are necessary for the condensation of nucleosome chains into higher-order structures. The chain is Histone H1 from Solanum pennellii (Tomato).